The primary structure comprises 1771 residues: Myosin-H heavy chain (1771 aa).

The region spanning 7–57 is the Myosin N-terminal SH3-like domain; that stretch reads CGKEKVWVPNPEKGWINGDLIKEIPGEGWLVRDENGKEIKIEKDELRMQNP. One can recognise a Myosin motor domain in the interval 61–840; it reads EGIDDMTSLS…IIANLELLRS (780 aa). Position 154–161 (154–161) interacts with ATP; the sequence is GESGAGKT. The actin-binding stretch occupies residues 690–712; it reads LNSLMTTINSTNPHYIRCIKPNT. IQ domains are found at residues 843–872, 866–895, and 940–969; these read MINSATFIQKIWRGYTDRKAYTSTKHSSIY, TKHSSIYFQSLIRSYLQQLEYNSMVEENSA, and RIKKIVKIQSLWRSNLAKKQLKLLKAEAKS. Disordered stretches follow at residues 1070-1176, 1218-1282, and 1312-1343; these read EKQH…NNVD, VKKS…PINM, and LNNGTNPATSTTNGSGNPLSQSSPTGSDKHIQ. Residues 1077–1111 show a composition bias toward polar residues; the sequence is YKNNEVVGNTSFEGSTTTNNGVTSPPKSSPASPIR. Over residues 1112-1139 the composition is skewed to low complexity; the sequence is NSINSNSDTTISGSSDDSIDNTDSLILS. Basic and acidic residues predominate over residues 1143–1153; the sequence is HKGEDRKRNHE. A coiled-coil region spans residues 1180-1224; it reads RRQFNELEKEYKELKQMDETHKQYIESLKLQITQLEEKVKKSSSH. The span at 1253-1281 shows a compositional bias: low complexity; it reads NSSSHHQQQQQQHNISPSNSITSTTSPIN. The Dilute domain occupies 1427–1695; that stretch reads TGVLDPIETN…LTSLMDSPKY (269 aa).

Belongs to the TRAFAC class myosin-kinesin ATPase superfamily. Myosin family. In terms of assembly, myosin I heavy chain is single-headed. Dimer of a heavy and a light chain. Inability to self-assemble into filaments.

Myosin is a protein that binds to actin and has ATPase activity that is activated by actin. The polypeptide is Myosin-H heavy chain (myoH) (Dictyostelium discoideum (Social amoeba)).